Reading from the N-terminus, the 367-residue chain is Glutamate 5-kinase (367 aa).

Lysine 10 provides a ligand contact to ATP. The substrate site is built by serine 50, aspartate 137, and asparagine 149. Residue threonine 169–aspartate 170 participates in ATP binding. Residues alanine 275–glutamate 353 form the PUA domain.

The protein belongs to the glutamate 5-kinase family.

The protein localises to the cytoplasm. It carries out the reaction L-glutamate + ATP = L-glutamyl 5-phosphate + ADP. It participates in amino-acid biosynthesis; L-proline biosynthesis; L-glutamate 5-semialdehyde from L-glutamate: step 1/2. In terms of biological role, catalyzes the transfer of a phosphate group to glutamate to form L-glutamate 5-phosphate. In Salmonella paratyphi B (strain ATCC BAA-1250 / SPB7), this protein is Glutamate 5-kinase.